The sequence spans 642 residues: Aryl hydrocarbon receptor nuclear translocator homolog (642 aa).

The region spanning 13-66 is the bHLH domain; sequence ASRENHCEIERRRRNKMTAYITELSDMVPTCSALARKPDKLTILRMAVAHMKAL. 2 PAS domains span residues 85-156 and 271-341; these read DQEL…ESQN and TAAN…LKQK. The 44-residue stretch at 346-389 folds into the PAC domain; that stretch reads SLLYRARAKNSEYVWLRTQAYAFLNPYTDEVEYIVCTNSSGKTM. The segment at 450–612 is disordered; the sequence is QAPTPQQQQQ…GPAGAGQPQG (163 aa). Composition is skewed to polar residues over residues 463 to 482 and 528 to 554; these read RPGS…THSP and YQYQ…NGNR. A compositionally biased stretch (low complexity) spans 555–564; the sequence is QQAQPGAYQA.

As to quaternary structure, efficient DNA binding requires dimerization with another bHLH protein. Heterodimer with ahr, trh or sim. At stage 11, expression is detected in tracheal pits. At later stages, strong expression is also detected in the CNS.

Its subcellular location is the nucleus. Functionally, heterodimers of tgo/trh are involved in the control of breathless expression. Plays a role in the cellular or tissue response to oxygen deprivation. This chain is Aryl hydrocarbon receptor nuclear translocator homolog (tgo), found in Drosophila melanogaster (Fruit fly).